Reading from the N-terminus, the 246-residue chain is Mast cell protease 1 (246 aa).

An N-terminal signal peptide occupies residues 1–18 (MQALLFLMALLLPSGAGA). Positions 19–20 (EE) are cleaved as a propeptide — activation peptide. One can recognise a Peptidase S1 domain in the interval 21–244 (IIGGVEARPH…YVPWIKTVIN (224 aa)). Cys50 and Cys66 are disulfide-bonded. His65 acts as the Charge relay system in catalysis. Asn102 is a glycosylation site (N-linked (GlcNAc...) asparagine). The active-site Charge relay system is the Asp109. 2 disulfides stabilise this stretch: Cys143–Cys208 and Cys174–Cys187. Ser202 acts as the Charge relay system in catalysis.

This sequence belongs to the peptidase S1 family. Granzyme subfamily. Mucosal mast cells.

Its subcellular location is the secreted. The protein localises to the cytoplasmic granule. Functionally, has a chymotrypsin-like activity. This chain is Mast cell protease 1 (Mcpt1), found in Mus musculus (Mouse).